The sequence spans 96 residues: Putative septation protein SpoVG (96 aa).

The protein belongs to the SpoVG family.

Functionally, could be involved in septation. The polypeptide is Putative septation protein SpoVG (Geobacillus sp. (strain WCH70)).